We begin with the raw amino-acid sequence, 209 residues long: Elongation factor Ts, chloroplastic (209 aa).

Belongs to the EF-Ts family.

The protein localises to the plastid. The protein resides in the chloroplast. Functionally, associates with the EF-Tu.GDP complex and induces the exchange of GDP to GTP. It remains bound to the aminoacyl-tRNA.EF-Tu.GTP complex up to the GTP hydrolysis stage on the ribosome. The chain is Elongation factor Ts, chloroplastic (tsf) from Cyanidioschyzon merolae (strain NIES-3377 / 10D) (Unicellular red alga).